Consider the following 239-residue polypeptide: Fatty acid metabolism regulator protein (239 aa).

The HTH gntR-type domain occupies 6–74; it reads QSPAGFAEEY…HGKPTKVNNF (69 aa). The H-T-H motif DNA-binding region spans 34–53; that stretch reads ERELSELIGVTRTTLREVLQ.

In terms of assembly, homodimer.

Its subcellular location is the cytoplasm. In terms of biological role, multifunctional regulator of fatty acid metabolism. Represses transcription of at least eight genes required for fatty acid transport and beta-oxidation including fadA, fadB, fadD, fadL and fadE. Activates transcription of at least three genes required for unsaturated fatty acid biosynthesis: fabA, fabB and iclR, the gene encoding the transcriptional regulator of the aceBAK operon encoding the glyoxylate shunt enzymes. Binding of FadR is specifically inhibited by long chain fatty acyl-CoA compounds. This is Fatty acid metabolism regulator protein from Salmonella typhi.